A 200-amino-acid chain; its full sequence is Protein Nef (200 aa).

A lipid anchor (N-myristoyl glycine; by host) is attached at glycine 2. Serine 6 is modified (phosphoserine; by host). The interval 58–60 is acidic; interacts with host PACS1 and PACS2; stabilizes the interaction of NEF/MHC-I with host AP1M1; necessary for MHC-I internalization; it reads EEE. The interval 64-73 is SH3-binding; interaction with Src family tyrosine kinases; it reads PVRPQVPLRP. A PxxP; stabilizes the interaction of NEF/MHC-I with host AP1M1; necessary for MHC-I internalization motif is present at residues 67-70; that stretch reads PQVP. The interval 103–119 is mediates dimerization, Nef-PTE1 interaction; that stretch reads EILDLWVYHTQGYFPDW. Residues 143 to 175 are binding to ATP6V1H; sequence VDPEEIEKANEGENNCLLHPISLHGMEDEDREV. The Dileucine internalization motif; necessary for CD4 internalization motif lies at 159–160; the sequence is LL. The Diacidic; necessary for CD4 internalization motif lies at 169–170; that stretch reads ED.

Belongs to the lentivirus primate group Nef protein family. In terms of assembly, monomer; cytosolic form. Homodimer; membrane bound form. Interacts with Nef associated p21-activated kinase (PAK2); this interaction activates PAK2. Associates with the Nef-MHC-I-AP1 complex; this complex is required for MHC-I internalization. Interacts (via C-terminus) with host PI3-kinase. Interacts with host PACS1; this interaction seems to be weak. Interacts with host PACS2. Interacts with host LCK and MAPK3; these interactions inhibit the kinase activity of the latter. Interacts with host ATP6V1H; this interaction may play a role in CD4 endocytosis. Associates with the CD4-Nef-AP2 complex; this complex is required for CD4 internalization. Interacts with host AP2 subunit alpha and AP2 subunit sigma2. Interacts with TCR-zeta chain; this interaction up-regulates the Fas ligand (FasL) surface expression. Interacts with host HCK, LYN, and SRC; these interactions activate the Src family kinases. Interacts with MAP3K5; this interaction inhibits the Fas and TNFR-mediated death signals. Interacts with beta-COP and PTE1. Interacts with human RACK1; this increases Nef phosphorylation by PKC. Interacts with TP53; this interaction decreases the half-life of TP53, protecting the infected cell against p53-mediated apoptosis. The virion-associated Nef proteins are cleaved by the viral protease to release the soluble C-terminal core protein. Nef is probably cleaved concomitantly with viral structural proteins on maturation of virus particles. In terms of processing, myristoylated. Post-translationally, phosphorylated on serine residues, probably by host PKCdelta and theta.

It is found in the host cell membrane. Its subcellular location is the virion. The protein localises to the secreted. It localises to the host Golgi apparatus membrane. In terms of biological role, factor of infectivity and pathogenicity, required for optimal virus replication. Alters numerous pathways of T-lymphocyte function and down-regulates immunity surface molecules in order to evade host defense and increase viral infectivity. Alters the functionality of other immunity cells, like dendritic cells, monocytes/macrophages and NK cells. Functionally, in infected CD4(+) T-lymphocytes, down-regulates the surface MHC-I, mature MHC-II, CD4, CD28, CCR5 and CXCR4 molecules. Mediates internalization and degradation of host CD4 through the interaction of with the cytoplasmic tail of CD4, the recruitment of AP-2 (clathrin adapter protein complex 2), internalization through clathrin coated pits, and subsequent transport to endosomes and lysosomes for degradation. Diverts host MHC-I molecules to the trans-Golgi network-associated endosomal compartments by an endocytic pathway to finally target them for degradation. MHC-I down-regulation may involve AP-1 (clathrin adapter protein complex 1) or possibly Src family kinase-ZAP70/Syk-PI3K cascade recruited by PACS2. In consequence infected cells are masked for immune recognition by cytotoxic T-lymphocytes. Decreasing the number of immune receptors also prevents reinfection by more HIV particles (superinfection). Down-regulates host SERINC3 and SERINC5 thereby excluding these proteins from the viral particles. Virion infectivity is drastically higher when SERINC3 or SERINC5 are excluded from the viral envelope, because these host antiviral proteins impair the membrane fusion event necessary for subsequent virion penetration. Bypasses host T-cell signaling by inducing a transcriptional program nearly identical to that of anti-CD3 cell activation. Interaction with TCR-zeta chain up-regulates the Fas ligand (FasL). Increasing surface FasL molecules and decreasing surface MHC-I molecules on infected CD4(+) cells send attacking cytotoxic CD8+ T-lymphocytes into apoptosis. Its function is as follows. Plays a role in optimizing the host cell environment for viral replication without causing cell death by apoptosis. Protects the infected cells from apoptosis in order to keep them alive until the next virus generation is ready to strike. Inhibits the Fas and TNFR-mediated death signals by blocking MAP3K5/ASK1. Decreases the half-life of TP53, protecting the infected cell against p53-mediated apoptosis. Inhibits the apoptotic signals regulated by the Bcl-2 family proteins through the formation of a Nef/PI3-kinase/PAK2 complex that leads to activation of PAK2 and induces phosphorylation of host BAD. In terms of biological role, extracellular Nef protein targets CD4(+) T-lymphocytes for apoptosis by interacting with CXCR4 surface receptors. The polypeptide is Protein Nef (Human immunodeficiency virus type 1 group M subtype F2 (isolate MP255) (HIV-1)).